Consider the following 1259-residue polypeptide: Protein retinal degeneration B (1259 aa).

The disordered stretch occupies residues 268–378 (GGGEECSDDS…SKGALHSPVG (111 aa)). Phosphoserine is present on residues serine 274 and serine 277. A compositionally biased stretch (low complexity) spans 284 to 293 (STAATAASTT). A compositionally biased stretch (acidic residues) spans 318–335 (SSDEEGEEEEDDDEDEND). The span at 347 to 363 (QGGSAQRSRSQSIQMAQ) shows a compositional bias: low complexity. 3 positions are modified to phosphoserine: serine 401, serine 403, and serine 434. 3 disordered regions span residues 427 to 454 (LLGE…GNSR), 472 to 500 (RGNK…STPS), and 660 to 692 (SQPG…NSRL). Over residues 663–678 (GTASGASNSGGDAATN) the composition is skewed to low complexity. Over residues 679 to 689 (INTHNPLSPRN) the composition is skewed to polar residues. In terms of domain architecture, DDHD spans 730-913 (LDFEVCDFFM…IAFILRQIGK (184 aa)).

Belongs to the PtdIns transfer protein family. PI transfer class IIA subfamily. In terms of tissue distribution, expressed in adult heads, not detected in bodies.

It carries out the reaction a 1,2-diacyl-sn-glycero-3-phospho-(1D-myo-inositol)(in) = a 1,2-diacyl-sn-glycero-3-phospho-(1D-myo-inositol)(out). The enzyme catalyses a 1,2-diacyl-sn-glycero-3-phosphate(in) = a 1,2-diacyl-sn-glycero-3-phosphate(out). Its function is as follows. Catalyzes the transfer of phosphatidylinositol (PI) and phosphatidic acid (PA) between membranes. May control phosphatidylinositol concentration in transport vesicles from the subrhabdomeric cisternae (SRC) to the rhabdomere. May function as a calcium transporter. The chain is Protein retinal degeneration B (rdgB) from Drosophila melanogaster (Fruit fly).